Reading from the N-terminus, the 72-residue chain is Peptide Ctri9194 (72 aa).

A signal peptide spans 1–23 (MKTQNVLLSFGIVFLMISFSSET). Position 38 is an isoleucine amide (Ile38). Residues 42 to 72 (SLKDVESLDFLFDPTFTAADLAVLENALEDY) constitute a propeptide that is removed on maturation.

Belongs to the non-disulfide-bridged peptide (NDBP) superfamily. Short antimicrobial peptide (group 4) family. In terms of tissue distribution, expressed by the venom gland.

The protein localises to the secreted. Antimicrobial peptide. This chain is Peptide Ctri9194, found in Chaerilus tricostatus (Scorpion).